Reading from the N-terminus, the 44-residue chain is Protein PsbN (44 aa).

A helical membrane pass occupies residues 6–26; it reads FFFTIFLWFFLLSITAYSIYV.

The protein belongs to the PsbN family.

It localises to the plastid. The protein localises to the chloroplast thylakoid membrane. May play a role in photosystem I and II biogenesis. This Stigeoclonium helveticum (Green alga) protein is Protein PsbN.